Consider the following 690-residue polypeptide: Xylosyl- and glucuronyltransferase LARGE2 (690 aa).

Residues 1 to 8 are Cytoplasmic-facing; sequence MLPRGRPR. A helical; Signal-anchor for type II membrane protein membrane pass occupies residues 9–29; sequence AMGAAVLLLLLLLVVGFFLFG. The Lumenal portion of the chain corresponds to 30-690; it reads RDPDYGLGTT…TALQQARSRA (661 aa). 2 N-linked (GlcNAc...) asparagine glycosylation sites follow: N51 and N78. A xylosyltransferase activity region spans residues 68–343; the sequence is LHVAIVCAGY…FLGYDGKLLR (276 aa). Mn(2+) is bound by residues D172 and D174. N202 is a glycosylation site (N-linked (GlcNAc...) asparagine). A glucuronyltransferase activity region spans residues 344–686; the sequence is RELFGCPNQF…LKYLTALQQA (343 aa). 2 residues coordinate Mn(2+): D492 and D494.

It in the C-terminal section; belongs to the glycosyltransferase 49 family. In the N-terminal section; belongs to the glycosyltransferase 8 family. The protein belongs to the glycosyltransferase 8 family. Interacts with B4GAT1. Mn(2+) serves as cofactor. As to expression, highly expressed in the testis and kidney, but weakly expressed in the heart and brain. Expressed during embryogenesis from 7 dpc.

The protein localises to the golgi apparatus membrane. The catalysed reaction is 3-O-[beta-D-GlcA-(1-&gt;3)-beta-D-Xyl-(1-&gt;4)-Rib-ol-P-Rib-ol-P-3-beta-D-GalNAc-(1-&gt;3)-beta-D-GlcNAc-(1-&gt;4)-(O-6-P-alpha-D-Man)]-Thr-[protein] + UDP-alpha-D-xylose = 3-O-[alpha-D-Xyl-(1-&gt;3)-beta-D-GlcA-(1-&gt;4)-beta-D-Xyl-(1-&gt;4)-Rib-ol-P-Rib-ol-P-3-beta-D-GalNAc-(1-&gt;3)-beta-D-GlcNAc-(1-&gt;4)-(O-6-P-alpha-D-Man)]-Thr-[protein] + UDP + H(+). It carries out the reaction 3-O-{(1-&gt;[3)-alpha-D-Xyl-(1-&gt;3)-beta-D-GlcA-(1-&gt;](n)-4)-beta-D-Xyl-(1-&gt;4)-Rib-ol-P-Rib-ol-P-3-beta-D-GalNAc-(1-&gt;3)-beta-D-GlcNAc-(1-&gt;4)-O-6-P-alpha-D-Man}-L-Thr-[protein] + UDP-alpha-D-glucuronate = 3-O-{beta-D-GlcA-(1-&gt;[3)-alpha-D-Xyl-(1-&gt;3)-beta-D-GlcA-(1-&gt;](n)-4)-beta-D-Xyl-(1-&gt;4)-Rib-ol-P-Rib-ol-P-3-beta-D-GalNAc-(1-&gt;3)-beta-D-GlcNAc-(1-&gt;4)-O-6-P-alpha-D-Man}-L-Thr-[protein] + UDP + H(+). The enzyme catalyses 3-O-{beta-D-GlcA-(1-&gt;[3)-alpha-D-Xyl-(1-&gt;3)-beta-D-GlcA-(1-&gt;](n)-4)-beta-D-Xyl-(1-&gt;4)-Rib-ol-P-Rib-ol-P-3-beta-D-GalNAc-(1-&gt;3)-beta-D-GlcNAc-(1-&gt;4)-O-6-P-alpha-D-Man}-L-Thr-[protein] + UDP-alpha-D-xylose = 3-O-{(1-&gt;[3)-alpha-D-Xyl-(1-&gt;3)-beta-D-GlcA-(1-&gt;](n+1)-4)-beta-D-Xyl-(1-&gt;4)-Rib-ol-P-Rib-ol-P-3-beta-D-GalNAc-(1-&gt;3)-beta-D-GlcNAc-(1-&gt;4)-O-6-P-alpha-D-Man}-L-Thr-[protein] + UDP + H(+). It functions in the pathway protein modification; protein glycosylation. Bifunctional glycosyltransferase with both alpha-1,3-xylosyltransferase and beta-1,3-glucuronyltransferase activities involved in the maturation of alpha-dystroglycan (DAG1) by glycosylation leading to DAG1 binding to laminin G-like domain-containing extracellular proteins with high affinity and in a phosphorylated-O-mannosyl trisaccharide dependent manner. Elongates the glucuronyl-beta-1,4-xylose-beta disaccharide primer structure by adding repeating units [-3-Xylose-alpha-1,3-GlcA-beta-1-] to produce a heteropolysaccharide. Supports the maturation of DAG1 more effectively than LARGE1. In addition, can modify both heparan sulfate (HS)- and chondroitin/dermatan sulfate (CS/DS)-proteoglycans (PGs), namely GPC4, with a glycosaminoglycan (GAG)-like polysaccharide composed of xylose and glucuronic acid to confer laminin binding. The protein is Xylosyl- and glucuronyltransferase LARGE2 of Mus musculus (Mouse).